We begin with the raw amino-acid sequence, 662 residues long: ATP-dependent RNA helicase DDX3X (662 aa).

Ser2 is modified (N-acetylserine). The tract at residues 2 to 139 (SHVAVENALG…KSDEDDWSKP (138 aa)) is required for TBK1 and IKBKE-dependent IFNB1 activation. The Nuclear export signal signature appears at 12 to 21 (LDQQFAGLDL). The disordered stretch occupies residues 19 to 144 (LDLNSSDNQS…DWSKPLPPSE (126 aa)). Positions 21–34 (LNSSDNQSGGSTAS) are enriched in polar residues. The tract at residues 38–44 (YIPPHLR) is interaction with EIF4E. The span at 44–68 (RNREATKGFYDKDSSGWSSSKDKDA) shows a compositional bias: basic and acidic residues. Lys55 is modified (N6-acetyllysine). Positions 70-89 (SSFGSRSDSRGKSSFFSDRG) are enriched in low complexity. The interaction with VACV protein K7 stretch occupies residues 81-90 (KSSFFSDRGS). Residues Ser82, Ser86, and Ser90 each carry the phosphoserine modification. The tract at residues 88–123 (RGSGSRGRFDDRGRSDYDGIGSRGDRSGFGKFERGG) is involved in binding to RNA G-quadruplex. Basic and acidic residues predominate over residues 94 to 130 (GRFDDRGRSDYDGIGSRGDRSGFGKFERGGNSRWCDK). Positions 100–110 (GRSDYDGIGSR) are interaction with IKBKE. Residues 100–662 (GRSDYDGIGS…NSQGVDWWGN (563 aa)) form an interaction with GSK3B region. Residue Arg101 is modified to Omega-N-methylarginine. Ser102 carries the phosphoserine; by IKKE modification. Position 104 is a phosphotyrosine (Tyr104). An Omega-N-methylarginine modification is found at Arg110. Lys118 carries the post-translational modification N6-acetyllysine. Phosphoserine is present on Ser131. Residues 139-172 (PLPPSERLEQELFSGGNTGINFEKYDDIPVEATG) are interaction with CHUK. The Q motif signature appears at 180-208 (ESFSDVEMGEIIMGNIELTRYTRPTPVQK). Ser181 carries the phosphoserine; by TBK1; in vitro modification. The residue at position 183 (Ser183) is a Phosphoserine; by TBK1. 200-207 (YTRPTPVQ) is a binding site for ATP. One can recognise a Helicase ATP-binding domain in the interval 211–403 (IPIIKEKRDL…RDFLDEYIFL (193 aa)). A Glycyl lysine isopeptide (Lys-Gly) (interchain with G-Cter in SUMO2) cross-link involves residue Lys215. 224–231 (AQTGSGKT) provides a ligand contact to ATP. A Phosphoserine; by TBK1; in vitro modification is found at Ser240. The segment at 250-259 (ALRAMKENGR) is involved in stimulation of ATPase activity by DNA and RNA, nucleic acid binding and unwinding and HIV-1 replication. Ser269 is subject to Phosphoserine; by TBK1; in vitro. A DEAD box motif is present at residues 347-350 (DEAD). The tract at residues 409–662 (GSTSENITQK…NSQGVDWWGN (254 aa)) is interaction with HCV core protein. The 162-residue stretch at 414–575 (NITQKVVWVE…EVPSWLENMA (162 aa)) folds into the Helicase C-terminal domain. Ser429 is modified (phosphoserine; by CSNK1E and TBK1; in vitro). Thr438 carries the phosphothreonine; by TBK1; in vitro modification. A phosphoserine; by TBK1; in vitro mark is found at Ser442 and Ser456. Phosphothreonine; by CSNK1E; in vitro is present on Thr469. Phosphoserine; by CSNK1E; in vitro is present on Ser470. Ser520 is subject to Phosphoserine; by TBK1; in vitro. Positions 536 to 661 (GNLGLATSFF…YNSQGVDWWG (126 aa)) are interaction with NXF1. A Phosphothreonine; by TBK1; in vitro modification is found at Thr542. A Phosphoserine; by CSNK1E and TBK1; in vitro modification is found at Ser543. Omega-N-methylarginine is present on Arg592. A phosphoserine mark is found at Ser594, Ser605, and Ser612. The segment at 601–634 (DYRQSSGASSSSFSSSRASSSRSGGGGHGSSRGF) is disordered. The segment covering 604-622 (QSSGASSSSFSSSRASSSR) has biased composition (low complexity). Residues Arg617 and Arg632 each carry the omega-N-methylarginine modification. The span at 623 to 634 (SGGGGHGSSRGF) shows a compositional bias: gly residues.

Belongs to the DEAD box helicase family. DDX3/DED1 subfamily. Homodimer; can bind RNA as a monomer and as a dimer/oligomer. Interacts with TDRD3. Interacts (when phosphorylated at Ser-102) with IRF3; the interaction facilitates the phosphorylation and activation of IRF3 by IKBKE. Directly interacts with XPO1/CRM1. The interaction with XPO1/CMR1 is dependent on the DDX3X nuclear export signal motif and XPO1 interaction with GTPase RAN in its active GTP-bound form. Weakly interacts with TBKBP1/SINTBAD. Directly interacts with TRAF3; this interaction stimulates TRAF3 'Lys-63' ubiquitination. Interacts with CSNK1E in a Wnt-dependent manner; this interaction greatly enhances CSNK1E affinity for ATP, stimulates its kinase activity and promotes CSNK1E-mediated DVL2 phosphorylation. In the presence of RNA, the interaction is decreased. Also interacts with CSNK1D and stimulates its kinase activity. Interacts with TRPV4; this interaction is decreased when the TRPV4 channel is activated, leading to DDX3X relocalization to the nucleus. Interacts with MAP3K14/NIK. Directly interacts with CHUK/IKKA after physiological activation of the TLR7 and TLR8 pathways; this interaction enhances CHUK autophosphorylation. May associate with EIF4F complex, composed of at least EIF4A, EIF4E and EIF4G1/EIF4G3. Directly interacts with EIF4E in an RNA-independent manner; this interaction enhances EIF4E cap-binding ability. Directly interacts with EIF4G1 in an RNA-independent manner. DDX3X competes with EIF4G1 for interaction with EIF4E. Interacts with EIF4A1 and EIF2S1 in an RNA-independent manner. Associates with the eukaryotic translation initiation factor 3 (eIF-3) complex, including with EIF3B and EIF3C subunits. Directly interacts with IKBKE/IKKE; this interaction stimulates IKBKE activating autophosphorylation and is induced upon viral infection. Interacts with TBK1. Interacts with SP1; this interaction potentiates SP1-induced CDKN1A/WAF1/CIP1 transcription. Interacts with GSK3A and GSK3B. Interacts with several death receptors, inclusing FAS, TNFRSF10A and TNFRSF10B. Recruited to TNFRSF10B in the absence of receptor stimulation. When TNFRSF10B is stimulated, further recruited to the receptor and cleaved by caspases. A large proteolytic fragment remains associated with TNFRSF10B. Interacts (via C-terminus) with NXF1/TAP; this interaction may be partly involved in DDX3X nuclear export and in NXF1 localization to stress granules. Identified in an mRNP complex, composed of at least DHX9, DDX3X, ELAVL1, HNRNPU, IGF2BP1/2, ILF3, PABPC1, PCBP2, PTBP2, STAU1, STAU2, SYNCRIP and YBX1. The interaction with IGF2BP1/2 is RNA-dependent. Directly interacts with PABPC1/PABP1 in an RNA-independent manner. This interaction increases in stressed cells and decreases during cell recovery. Interacts (via C-terminus) with MAVS/IPS-1; this interaction occurs rapidly, but transiently after Sendai virus infection. The interaction potentiates MAVS-mediated IFNB induction. Interacts with ERCC6/CBS. Interacts with DHX33 in an RNA-independent manner. Interacts with DDX5 in the cytoplasm; this interaction may be more efficient when both proteins are unphosphorylated. Interacts with RIGI/RIG-1. Interacts with IFIH1/MDA5. Interacts with NCAPH; this interaction may be important for the NCAPH localization at condensing chromosomes during mitosis. Interacts with NLRP3 (via NACHT domain) under inflammasome-activating conditions. Interacts with CAPRIN1. Interacts with HNF4A and NR0B2/SHP in an RNA-independent manner; this interaction disrupts the interaction between HNF4 and NR0B2 that forms inactive heterodimers and enhances the formation of active HNF4 homodimers. Interacts with CREBBP/CBP. Interacts with EP300/p300. Interacts with gamma-tubulin. Interacts with phosphorylated TP53. Directly interacts with RELA/p65; this interaction may trap RELA in the cytoplasm, impairing nuclear relocalization upon TNF activating signals. As to quaternary structure, (Microbial infection) Interacts with hepatitis B virus (HBV) polymerase in the cytoplasm; this interaction may inhibit DDX3X interaction with the IKBKE/TBK1 complex, and hence impair IKBKE/TBK1-mediated increase in IFNB production. In terms of assembly, (Microbial infection) Directly interacts with hepatitis C virus (HCV) core protein in the cytoplasm. (Microbial infection) Interacts with vaccinia virus (VACV) protein K7. As to quaternary structure, (Microbial infection) Interacts with HIV-1 protein Rev. In terms of assembly, (Microbial infection) Interacts with Venezuelan equine encephalitis virus non-structural protein 3. Phosphorylated by TBK1; the phosphorylation is required for the synergistic induction of IFNB mediated by TBK1 and DDX3X. Phosphorylated by IKBKE at Ser-102 after ssRNA viral infection; enhances the induction of INFB promoter by IRF3. The cytoplasmic form is highly phosphorylated in the G1/S phase of the cell cycle and much less at G2/M. Phosphorylation by CSNK1E may inhibit RNA-stimulated ATPase activity. Post-translationally, upon stimulation of death receptors, including TNFRSF10B, recruited to receptors and cleaved by caspases. Proteolytic fragments remain associated with the receptors. This cleavage presumably inactivates DDX3X anti-apoptotic function. In terms of processing, ubiquitinated by RNF39 via 'Lys-48'-linked ubiquitination; leading to proteasomal degradation. Widely expressed. In testis, expressed in spermatids. Expressed in epidermis and liver (at protein level).

It localises to the cell membrane. The protein localises to the nucleus. Its subcellular location is the cytoplasm. The protein resides in the stress granule. It is found in the inflammasome. It localises to the cell projection. The protein localises to the lamellipodium. Its subcellular location is the cytoskeleton. The protein resides in the microtubule organizing center. It is found in the centrosome. The enzyme catalyses ATP + H2O = ADP + phosphate + H(+). Its function is as follows. Multifunctional ATP-dependent RNA helicase. The ATPase activity can be stimulated by various ribo-and deoxynucleic acids indicative for a relaxed substrate specificity. In vitro can unwind partially double-stranded DNA with a preference for 5'-single-stranded DNA overhangs. Binds RNA G-quadruplex (rG4s) structures, including those located in the 5'-UTR of NRAS mRNA. Involved in many cellular processes, which do not necessarily require its ATPase/helicase catalytic activities. Involved in transcription regulation. Positively regulates CDKN1A/WAF1/CIP1 transcription in an SP1-dependent manner, hence inhibits cell growth. This function requires its ATPase, but not helicase activity. CDKN1A up-regulation may be cell-type specific. Binds CDH1/E-cadherin promoter and represses its transcription. Potentiates HNF4A-mediated MTTP transcriptional activation; this function requires ATPase, but not helicase activity. Facilitates HNF4A acetylation, possibly catalyzed by CREBBP/EP300, thereby increasing the DNA-binding affinity of HNF4 to its response element. In addition, disrupts the interaction between HNF4 and SHP that forms inactive heterodimers and enhances the formation of active HNF4 homodimers. By promoting HNF4A-induced MTTP expression, may play a role in lipid homeostasis. May positively regulate TP53 transcription. Associates with mRNPs, predominantly with spliced mRNAs carrying an exon junction complex (EJC). Involved in the regulation of translation initiation. Not involved in the general process of translation, but promotes efficient translation of selected complex mRNAs, containing highly structured 5'-untranslated regions (UTR). This function depends on helicase activity. Might facilitate translation by resolving secondary structures of 5'-UTRs during ribosome scanning. Alternatively, may act prior to 43S ribosomal scanning and promote 43S pre-initiation complex entry to mRNAs exhibiting specific RNA motifs, by performing local remodeling of transcript structures located close to the cap moiety. Independently of its ATPase activity, promotes the assembly of functional 80S ribosomes and disassembles from ribosomes prior to the translation elongation process. Positively regulates the translation of cyclin E1/CCNE1 mRNA and consequently promotes G1/S-phase transition during the cell cycle. May activate TP53 translation. Required for endoplasmic reticulum stress-induced ATF4 mRNA translation. Independently of its ATPase/helicase activity, enhances IRES-mediated translation; this activity requires interaction with EIF4E. Independently of its ATPase/helicase activity, has also been shown specifically repress cap-dependent translation, possibly by acting on translation initiation factor EIF4E. Involved in innate immunity, acting as a viral RNA sensor. Binds viral RNAs and promotes the production of type I interferon (IFN-alpha and IFN-beta). Potentiate MAVS/RIGI-mediated induction of IFNB in early stages of infection. Enhances IFNB1 expression via IRF3/IRF7 pathway and participates in NFKB activation in the presence of MAVS and TBK1. Involved in TBK1 and IKBKE-dependent IRF3 activation leading to IFNB induction, acts as a scaffolding adapter that links IKBKE and IRF3 and coordinates their activation. Involved in the TLR7/TLR8 signaling pathway leading to type I interferon induction, including IFNA4 production. In this context, acts as an upstream regulator of IRF7 activation by MAP3K14/NIK and CHUK/IKKA. Stimulates CHUK autophosphorylation and activation following physiological activation of the TLR7 and TLR8 pathways, leading to MAP3K14/CHUK-mediated activatory phosphorylation of IRF7. Also stimulates MAP3K14/CHUK-dependent NF-kappa-B signaling. Negatively regulates TNF-induced IL6 and IL8 expression, via the NF-kappa-B pathway. May act by interacting with RELA/p65 and trapping it in the cytoplasm. May also bind IFNB promoter; the function is independent of IRF3. Involved in both stress and inflammatory responses. Independently of its ATPase/helicase activity, required for efficient stress granule assembly through its interaction with EIF4E, hence promotes survival in stressed cells. Independently of its helicase activity, regulates NLRP3 inflammasome assembly through interaction with NLRP3 and hence promotes cell death by pyroptosis during inflammation. This function is independent of helicase activity. Therefore DDX3X availability may be used to interpret stress signals and choose between pro-survival stress granules and pyroptotic NLRP3 inflammasomes and serve as a live-or-die checkpoint in stressed cells. In association with GSK3A/B, negatively regulates extrinsic apoptotic signaling pathway via death domain receptors, including TNFRSF10B, slowing down the rate of CASP3 activation following death receptor stimulation. Cleavage by caspases may inactivate DDX3X and relieve the inhibition. Independently of its ATPase/helicase activity, allosteric activator of CSNK1E. Stimulates CSNK1E-mediated phosphorylation of DVL2, thereby involved in the positive regulation of Wnt/beta-catenin signaling pathway. Also activates CSNK1A1 and CSNK1D in vitro, but it is uncertain if these targets are physiologically relevant. ATPase and casein kinase-activating functions are mutually exclusive. May be involved in mitotic chromosome segregation. Functionally, (Microbial infection) Facilitates hepatitis C virus (HCV) replication. During infection, HCV core protein inhibits the interaction between MAVS and DDX3X and therefore impairs MAVS-dependent INFB induction and might recruit DDX3X to HCV replication complex. (Microbial infection) Facilitates HIV-1 replication. Acts as a cofactor for XPO1-mediated nuclear export of HIV-1 Rev RNAs. This function is strongly stimulated in the presence of TBK1 and requires DDX3X ATPase activity. In terms of biological role, (Microbial infection) Facilitates Zika virus (ZIKV) replication. Its function is as follows. (Microbial infection) Facilitates Dengue virus (DENV) replication. Functionally, (Microbial infection) Facilitates Venezuelan equine encephalitis virus (VEEV) replication. In Homo sapiens (Human), this protein is ATP-dependent RNA helicase DDX3X (DDX3X).